We begin with the raw amino-acid sequence, 481 residues long: Multiple inositol polyphosphate phosphatase 1 (481 aa).

The N-terminal stretch at 1-30 is a signal peptide; that stretch reads MLRGARSHLPASVAPAAVLAAALLSSFARC. His-89 is an active-site residue. N-linked (GlcNAc...) asparagine glycans are attached at residues Asn-236 and Asn-475. A Prevents secretion from ER motif is present at residues 478 to 481; that stretch reads SDEL.

The protein belongs to the histidine acid phosphatase family. MINPP1 subfamily. In terms of processing, N-glycosylated. In terms of tissue distribution, widely expressed with highest levels in kidney, intestine, thymus and liver.

Its subcellular location is the endoplasmic reticulum lumen. It is found in the secreted. It localises to the cell membrane. The enzyme catalyses 1D-myo-inositol hexakisphosphate + H2O = 1D-myo-inositol 1,2,4,5,6-pentakisphosphate + phosphate. It carries out the reaction 1D-myo-inositol 1,2,4,5,6-pentakisphosphate + H2O = 1D-myo-inositol 1,2,5,6-tetrakisphosphate + phosphate. The catalysed reaction is 1D-myo-inositol 1,2,5,6-tetrakisphosphate + H2O = 1D-myo-inositol 1,2,6-trisphosphate + phosphate. It catalyses the reaction 1D-myo-inositol 1,2,6-trisphosphate + H2O = 1D-myo-inositol 1,2-bisphosphate + phosphate. The enzyme catalyses 1D-myo-inositol 1,2-bisphosphate + H2O = 1D-myo-inositol 2-phosphate + phosphate. It carries out the reaction 1D-myo-inositol hexakisphosphate + H2O = 1D-myo-inositol 1,2,3,5,6-pentakisphosphate + phosphate. The catalysed reaction is 1D-myo-inositol 1,2,3,5,6-pentakisphosphate + H2O = 1D-myo-inositol 1,2,3,6-tetrakisphosphate + phosphate. It catalyses the reaction 1D-myo-inositol 1,2,3,6-tetrakisphosphate + H2O = 1D-myo-inositol 1,2,3-trisphosphate + phosphate. The enzyme catalyses 1D-myo-inositol 1,2,3-trisphosphate + H2O = 1D-myo-inositol 2,3-bisphosphate + phosphate. It carries out the reaction 1D-myo-inositol 2,3-bisphosphate + H2O = 1D-myo-inositol 2-phosphate + phosphate. The catalysed reaction is 1D-myo-inositol 1,3,4,5,6-pentakisphosphate + H2O = 1D-myo-inositol 1,4,5,6-tetrakisphosphate + phosphate. It catalyses the reaction 1D-myo-inositol 1,4,5,6-tetrakisphosphate + H2O = 1D-myo-inositol 1,4,5-trisphosphate + phosphate. The enzyme catalyses (2R)-2,3-bisphosphoglycerate + H2O = (2R)-2-phosphoglycerate + phosphate. Its function is as follows. Multiple inositol polyphosphate phosphatase that hydrolyzes 1D-myo-inositol 1,3,4,5,6-pentakisphosphate (InsP5[2OH]) and 1D-myo-inositol hexakisphosphate (InsP6) to a range of less phosphorylated inositol phosphates. This regulates the availability of these various small molecule second messengers and metal chelators which control many aspects of cell physiology. Has a weak in vitro activity towards 1D-myo-inositol 1,4,5-trisphosphate which is unlikely to be physiologically relevant. By regulating intracellular inositol polyphosphates pools, which act as metal chelators, it may control the availability of intracellular calcium and iron, which are important for proper neuronal development and homeostasis. May have a dual substrate specificity, and function as a 2,3-bisphosphoglycerate 3-phosphatase hydrolyzing 2,3-bisphosphoglycerate to 2-phosphoglycerate. 2,3-bisphosphoglycerate (BPG) is formed as part of the Rapoport-Luebering glycolytic bypass and is a regulator of systemic oxygen homeostasis as the major allosteric effector of hemoglobin. The protein is Multiple inositol polyphosphate phosphatase 1 of Mus musculus (Mouse).